The following is a 76-amino-acid chain: Sec-independent protein translocase protein TatA (76 aa).

A helical transmembrane segment spans residues 1–21 (MLGGLTGWHLLIILAVILLLF). The segment covering 44 to 57 (VNEMKKDGDKDKGE) has biased composition (basic and acidic residues). A disordered region spans residues 44–76 (VNEMKKDGDKDKGEGGSTAPATDTGASSEQNSK). A compositionally biased stretch (polar residues) spans 62–76 (APATDTGASSEQNSK).

This sequence belongs to the TatA/E family. As to quaternary structure, the Tat system comprises two distinct complexes: a TatABC complex, containing multiple copies of TatA, TatB and TatC subunits, and a separate TatA complex, containing only TatA subunits. Substrates initially bind to the TatABC complex, which probably triggers association of the separate TatA complex to form the active translocon.

It localises to the cell membrane. In terms of biological role, part of the twin-arginine translocation (Tat) system that transports large folded proteins containing a characteristic twin-arginine motif in their signal peptide across membranes. TatA could form the protein-conducting channel of the Tat system. This chain is Sec-independent protein translocase protein TatA, found in Leifsonia xyli subsp. xyli (strain CTCB07).